Here is a 110-residue protein sequence, read N- to C-terminus: Large ribosomal subunit protein uL22 (110 aa).

It belongs to the universal ribosomal protein uL22 family. As to quaternary structure, part of the 50S ribosomal subunit.

This protein binds specifically to 23S rRNA; its binding is stimulated by other ribosomal proteins, e.g. L4, L17, and L20. It is important during the early stages of 50S assembly. It makes multiple contacts with different domains of the 23S rRNA in the assembled 50S subunit and ribosome. Its function is as follows. The globular domain of the protein is located near the polypeptide exit tunnel on the outside of the subunit, while an extended beta-hairpin is found that lines the wall of the exit tunnel in the center of the 70S ribosome. This chain is Large ribosomal subunit protein uL22, found in Stutzerimonas stutzeri (strain A1501) (Pseudomonas stutzeri).